We begin with the raw amino-acid sequence, 147 residues long: Small ribosomal subunit protein uS9 (147 aa).

The segment at 128–147 (KERKKYGQMGARAKYRWSKR) is disordered.

The protein belongs to the universal ribosomal protein uS9 family.

The polypeptide is Small ribosomal subunit protein uS9 (rpsI) (Aquifex aeolicus (strain VF5)).